Reading from the N-terminus, the 689-residue chain is Elongation factor G (689 aa).

Residues E8–T282 enclose the tr-type G domain. Residues A17 to T24, D81 to H85, and N135 to D138 contribute to the GTP site.

The protein belongs to the TRAFAC class translation factor GTPase superfamily. Classic translation factor GTPase family. EF-G/EF-2 subfamily.

Its subcellular location is the cytoplasm. Functionally, catalyzes the GTP-dependent ribosomal translocation step during translation elongation. During this step, the ribosome changes from the pre-translocational (PRE) to the post-translocational (POST) state as the newly formed A-site-bound peptidyl-tRNA and P-site-bound deacylated tRNA move to the P and E sites, respectively. Catalyzes the coordinated movement of the two tRNA molecules, the mRNA and conformational changes in the ribosome. This chain is Elongation factor G, found in Desulforudis audaxviator (strain MP104C).